We begin with the raw amino-acid sequence, 612 residues long: Elongation factor 4 (612 aa).

Residues 11-193 (NHIRNFSIVA…KIVTDIPAPS (183 aa)) form the tr-type G domain. Residues 23 to 28 (DHGKST) and 140 to 143 (NKID) contribute to the GTP site.

The protein belongs to the TRAFAC class translation factor GTPase superfamily. Classic translation factor GTPase family. LepA subfamily.

The protein resides in the cell membrane. It catalyses the reaction GTP + H2O = GDP + phosphate + H(+). Required for accurate and efficient protein synthesis under certain stress conditions. May act as a fidelity factor of the translation reaction, by catalyzing a one-codon backward translocation of tRNAs on improperly translocated ribosomes. Back-translocation proceeds from a post-translocation (POST) complex to a pre-translocation (PRE) complex, thus giving elongation factor G a second chance to translocate the tRNAs correctly. Binds to ribosomes in a GTP-dependent manner. This is Elongation factor 4 from Lactobacillus acidophilus (strain ATCC 700396 / NCK56 / N2 / NCFM).